A 157-amino-acid chain; its full sequence is Transcription antitermination protein NusB (157 aa).

It belongs to the NusB family.

Functionally, involved in transcription antitermination. Required for transcription of ribosomal RNA (rRNA) genes. Binds specifically to the boxA antiterminator sequence of the ribosomal RNA (rrn) operons. The sequence is that of Transcription antitermination protein NusB from Xylella fastidiosa (strain Temecula1 / ATCC 700964).